The sequence spans 63 residues: Large ribosomal subunit protein bL28 (63 aa).

Belongs to the bacterial ribosomal protein bL28 family.

The sequence is that of Large ribosomal subunit protein bL28 from Beutenbergia cavernae (strain ATCC BAA-8 / DSM 12333 / CCUG 43141 / JCM 11478 / NBRC 16432 / NCIMB 13614 / HKI 0122).